The chain runs to 104 residues: uncharacterized protein (104 aa).

Disordered regions lie at residues 1 to 20 and 83 to 104; these read MTETSTAKVATTKKSTTTRK and TASASSSGKKVVASKKKVVAKK. Low complexity predominate over residues 83–93; sequence TASASSSGKKV. Over residues 94 to 104 the composition is skewed to basic residues; the sequence is VASKKKVVAKK.

This is an uncharacterized protein from Dictyostelium discoideum (Social amoeba).